The following is a 106-amino-acid chain: MAAPGPVSPEAPFDPSKPPVIEGFSPTVYSNPEGFKEKFIRKTRENPMVPIGCLGTAAALTYGLYCFHRGQSHRSQLMMRTRIAAQGFTVVAILLGLAASAMKSQA.

An N-acetylalanine modification is found at Ala-2. In terms of domain architecture, HIG1 spans 20-106 (VIEGFSPTVY…LAASAMKSQA (87 aa)). 2 consecutive transmembrane segments (helical) span residues 47–67 (PMVP…LYCF) and 83–103 (IAAQ…SAMK).

As to quaternary structure, associates with cytochrome c oxidase (COX, complex IV); proposed complex component.

Its subcellular location is the mitochondrion membrane. It localises to the mitochondrion inner membrane. Proposed subunit of cytochrome c oxidase (COX, complex IV), which is the terminal component of the mitochondrial respiratory chain that catalyzes the reduction of oxygen to water. May be involved in cytochrome c oxidase activity. May play a role in the assembly of respiratory supercomplexes. The polypeptide is HIG1 domain family member 2A (Higd2a) (Mus musculus (Mouse)).